A 106-amino-acid chain; its full sequence is Ig kappa chain C region, A allele (106 aa).

The region spanning 5 to 102 (PTVSIFPPSM…SSSPVVKSFN (98 aa)) is the Ig-like domain. A disulfide bridge connects residues C26 and C86.

This chain is Ig kappa chain C region, A allele, found in Rattus norvegicus (Rat).